Reading from the N-terminus, the 337-residue chain is tRNA N6-adenosine threonylcarbamoyltransferase (337 aa).

Positions 111 and 115 each coordinate Fe cation. Residues 134-138, D167, G180, and N272 contribute to the substrate site; that span reads LVSGG. D300 serves as a coordination point for Fe cation.

The protein belongs to the KAE1 / TsaD family. Fe(2+) is required as a cofactor.

It localises to the cytoplasm. It catalyses the reaction L-threonylcarbamoyladenylate + adenosine(37) in tRNA = N(6)-L-threonylcarbamoyladenosine(37) in tRNA + AMP + H(+). Its function is as follows. Required for the formation of a threonylcarbamoyl group on adenosine at position 37 (t(6)A37) in tRNAs that read codons beginning with adenine. Is involved in the transfer of the threonylcarbamoyl moiety of threonylcarbamoyl-AMP (TC-AMP) to the N6 group of A37, together with TsaE and TsaB. TsaD likely plays a direct catalytic role in this reaction. The protein is tRNA N6-adenosine threonylcarbamoyltransferase of Cronobacter sakazakii (strain ATCC BAA-894) (Enterobacter sakazakii).